A 74-amino-acid chain; its full sequence is MMFRLTSVGCFLLVIVLLNVAVLTNASCRNEGAMCSFGFQCCKKECCMSHCTDFCRNPDKRAHGHGLLRFWGQR.

The first 26 residues, 1–26, serve as a signal peptide directing secretion; that stretch reads MMFRLTSVGCFLLVIVLLNVAVLTNA. 4 cysteine pairs are disulfide-bonded: cysteine 28–cysteine 42, cysteine 35–cysteine 47, cysteine 41–cysteine 51, and cysteine 46–cysteine 55. Positions 62–74 are excised as a propeptide; the sequence is AHGHGLLRFWGQR.

It belongs to the conotoxin I2 superfamily. In terms of tissue distribution, expressed by the venom duct.

Its subcellular location is the secreted. The protein is Conotoxin Vt11.7 of Conus planorbis (Planorbis cone).